The sequence spans 347 residues: NADH-ubiquinone oxidoreductase chain 2 (347 aa).

Helical transmembrane passes span 3-23, 25-45, 59-79, 96-116, 122-142, 149-169, 178-198, 201-221, 237-257, 274-294, and 323-343; these read PPIF…VMTS, HWML…PILM, YFLT…INLL, ILMT…FWVP, ISLS…LSIL, INPH…GWGG, IMAY…LYNP, MFLN…LFML, APLI…LPPL, EMII…YFYM, and TIFL…TPMI.

It belongs to the complex I subunit 2 family. As to quaternary structure, core subunit of respiratory chain NADH dehydrogenase (Complex I) which is composed of 45 different subunits. Interacts with TMEM242.

The protein localises to the mitochondrion inner membrane. It catalyses the reaction a ubiquinone + NADH + 5 H(+)(in) = a ubiquinol + NAD(+) + 4 H(+)(out). Its function is as follows. Core subunit of the mitochondrial membrane respiratory chain NADH dehydrogenase (Complex I) which catalyzes electron transfer from NADH through the respiratory chain, using ubiquinone as an electron acceptor. Essential for the catalytic activity and assembly of complex I. The chain is NADH-ubiquinone oxidoreductase chain 2 from Viverra tangalunga (Malayan civet).